A 295-amino-acid chain; its full sequence is G1/S-specific cyclin-D1 (295 aa).

The Cyclin N-terminal domain occupies 28–152 (LRAMLKAEET…VLVNKLKWNL (125 aa)). The disordered stretch occupies residues 264 to 295 (QQNLDPKAAEEEEEEEEVDLACTPTDVRDVNI). Lysine 270 is covalently cross-linked (Glycyl lysine isopeptide (Lys-Gly) (interchain with G-Cter in ubiquitin)). Residues 273 to 282 (EEEEEEEEVD) show a composition bias toward acidic residues. Threonine 286 is modified (phosphothreonine).

This sequence belongs to the cyclin family. Cyclin D subfamily. As to quaternary structure, interacts with either CDK4 or CDK6 protein kinase to form a serine/threonine kinase holoenzyme complex. The cyclin subunit imparts substrate specificity to the complex. Component of the ternary complex CCND1/CDK4/CDKN1B required for nuclear translocation and modulation of CDK4-mediated kinase activity. Interacts directly with CDKN1B. Can form similar complexes with either CDKN1A or CDKN2A. Interacts with UHRF2; the interaction ubiquitinates CCND1 and appears to occur independently of phosphorylation. Interacts with USP2. Interacts (via cyclin N-terminal domain) with INSM1 (via N-terminal region); the interaction competes with the binding of CCND1 to CDK4 during cell cycle progression and inhibits CDK4 activity. Interacts with CDK4; the interaction is prevented with the binding of CCND1 to INSM1 during cell cycle progression. Post-translationally, phosphorylation at Thr-286 by MAP kinases is required for ubiquitination and degradation by the DCX(AMBRA1) complex. It also plays an essential role for recognition by the FBXO31 component of SCF (SKP1-cullin-F-box) protein ligase complex following DNA damage. In terms of processing, ubiquitinated at Lys-270 by the DCX(AMBRA1) complex during the transition from G1 to S cell phase, leading to its degradation: ubiquitination is dependent on Thr-286 phosphorylation. The DCX(AMBRA1) complex represents the major regulator of CCND1 stability during the G1/S transition. Also ubiquitinated by the SCF(FBXO4) and Cul7-RING(FBXW8) ubiquitin-protein ligase complexes. Following DNA damage it is ubiquitinated by the SCF(FBXO31) protein ligase complex. SCF(FBXO31) ubiquitination is dependent on Thr-286 phosphorylation. Ubiquitinated also by UHRF2 apparently in a phosphorylation-independent manner. Ubiquitination leads to its degradation and G1 arrest. Deubiquitinated by USP2; leading to its stabilization.

Its subcellular location is the nucleus. The protein resides in the cytoplasm. It is found in the nucleus membrane. Functionally, regulatory component of the cyclin D1-CDK4 (DC) complex that phosphorylates and inhibits members of the retinoblastoma (RB) protein family including RB1 and regulates the cell-cycle during G(1)/S transition. Phosphorylation of RB1 allows dissociation of the transcription factor E2F from the RB/E2F complex and the subsequent transcription of E2F target genes which are responsible for the progression through the G(1) phase. Hypophosphorylates RB1 in early G(1) phase. Cyclin D-CDK4 complexes are major integrators of various mitogenenic and antimitogenic signals. Also a substrate for SMAD3, phosphorylating SMAD3 in a cell-cycle-dependent manner and repressing its transcriptional activity. Component of the ternary complex, cyclin D1/CDK4/CDKN1B, required for nuclear translocation and activity of the cyclin D-CDK4 complex. Exhibits transcriptional corepressor activity with INSM1 on the NEUROD1 and INS promoters in a cell cycle-independent manner. The sequence is that of G1/S-specific cyclin-D1 (CCND1) from Bos taurus (Bovine).